An 82-amino-acid polypeptide reads, in one-letter code: Progonadoliberin-3 (82 aa).

The signal sequence occupies residues Met-1–Ser-23. Residue Gln-24 is modified to Pyrrolidone carboxylic acid. Gly-33 bears the Glycine amide mark.

The protein belongs to the GnRH family. Brain.

Its subcellular location is the secreted. In terms of biological role, stimulates the secretion of gonadotropins. This Oncorhynchus nerka (Sockeye salmon) protein is Progonadoliberin-3 (gnrh3).